Here is a 384-residue protein sequence, read N- to C-terminus: Monomethylxanthine methyltransferase 2 (384 aa).

S-adenosyl-L-homocysteine contacts are provided by Tyr-18, Cys-61, Asn-66, Asp-100, Leu-101, Ser-139, Phe-140, and Cys-156. Tyr-157, His-160, and Trp-161 together coordinate theobromine. Mg(2+) contacts are provided by Asn-178, Phe-262, and Asn-263. Tyr-368 serves as a coordination point for theobromine.

This sequence belongs to the methyltransferase superfamily. Type-7 methyltransferase family. It depends on Mg(2+) as a cofactor. Expressed, at low levels, in young leaves, floral buds and immature fruits (grains), but not in old leaves and mature fruits. Highly expressed in developing endosperm and flower buds. Detected in young leaves.

The enzyme catalyses 7-methylxanthine + S-adenosyl-L-methionine = theobromine + S-adenosyl-L-homocysteine + H(+). It participates in alkaloid biosynthesis. Its function is as follows. Involved in the biosynthesis of caffeine. Catalyzes the conversion of 7-methylxanthine (7mX) to theobromine and with a lower activity of paraxanthine to caffeine. Does not have 1-N-methylation activity. The sequence is that of Monomethylxanthine methyltransferase 2 from Coffea arabica (Arabian coffee).